Consider the following 541-residue polypeptide: Chaperonin GroEL 1 (541 aa).

ATP contacts are provided by residues 30–33 (TLGP), 87–91 (DGTTT), G414, 478–480 (NAA), and D494.

Belongs to the chaperonin (HSP60) family. In terms of assembly, forms a cylinder of 14 subunits composed of two heptameric rings stacked back-to-back. Interacts with the co-chaperonin GroES.

It localises to the cytoplasm. The enzyme catalyses ATP + H2O + a folded polypeptide = ADP + phosphate + an unfolded polypeptide.. Together with its co-chaperonin GroES, plays an essential role in assisting protein folding. The GroEL-GroES system forms a nano-cage that allows encapsulation of the non-native substrate proteins and provides a physical environment optimized to promote and accelerate protein folding. This is Chaperonin GroEL 1 from Thermobifida fusca (strain YX).